Consider the following 80-residue polypeptide: Large ribosomal subunit protein uL24 (80 aa).

Belongs to the universal ribosomal protein uL24 family. As to quaternary structure, part of the 50S ribosomal subunit.

Functionally, one of two assembly initiator proteins, it binds directly to the 5'-end of the 23S rRNA, where it nucleates assembly of the 50S subunit. In terms of biological role, one of the proteins that surrounds the polypeptide exit tunnel on the outside of the subunit. In Chlorobium phaeovibrioides (strain DSM 265 / 1930) (Prosthecochloris vibrioformis (strain DSM 265)), this protein is Large ribosomal subunit protein uL24.